The chain runs to 61 residues: Sodium/potassium-transporting ATPase subunit gamma (61 aa).

The chain crosses the membrane as a helical span at residues Lys-24 to Gly-44.

Belongs to the FXYD family. Regulatory subunit of the sodium/potassium-transporting ATPase which is composed of a catalytic alpha subunit, an auxiliary non-catalytic beta subunit and an additional regulatory subunit.

It localises to the membrane. Its function is as follows. May be involved in forming the receptor site for cardiac glycoside binding or may modulate the transport function of the sodium ATPase. The polypeptide is Sodium/potassium-transporting ATPase subunit gamma (fxyd2) (Xenopus laevis (African clawed frog)).